We begin with the raw amino-acid sequence, 284 residues long: Nucleotide-binding protein SO_3964 (284 aa).

Position 8-15 (8-15 (GRSGSGKS)) interacts with ATP. Residue 56–59 (DVRN) participates in GTP binding.

It belongs to the RapZ-like family.

Displays ATPase and GTPase activities. This chain is Nucleotide-binding protein SO_3964, found in Shewanella oneidensis (strain ATCC 700550 / JCM 31522 / CIP 106686 / LMG 19005 / NCIMB 14063 / MR-1).